The chain runs to 147 residues: Ubiquitin-conjugating enzyme E2 D4 (147 aa).

The 147-residue stretch at 1–147 (MALKRIQKEL…AREWTQKYAM (147 aa)) folds into the UBC core domain. Catalysis depends on Cys85, which acts as the Glycyl thioester intermediate.

Belongs to the ubiquitin-conjugating enzyme family.

It catalyses the reaction S-ubiquitinyl-[E1 ubiquitin-activating enzyme]-L-cysteine + [E2 ubiquitin-conjugating enzyme]-L-cysteine = [E1 ubiquitin-activating enzyme]-L-cysteine + S-ubiquitinyl-[E2 ubiquitin-conjugating enzyme]-L-cysteine.. The protein operates within protein modification; protein ubiquitination. Functionally, accepts ubiquitin from the E1 complex and catalyzes its covalent attachment to other proteins. In vitro able to promote polyubiquitination using all 7 ubiquitin Lys residues, but may prefer 'Lys-11' and 'Lys-48'-linked polyubiquitination. This Homo sapiens (Human) protein is Ubiquitin-conjugating enzyme E2 D4 (UBE2D4).